The following is a 352-amino-acid chain: Histidine protein kinase SaeS (352 aa).

The next 2 helical transmembrane spans lie at Gln9–Tyr29 and Thr41–Ile61. The Histidine kinase domain occupies Asn130–Gln349. Residue His133 is modified to Phosphohistidine; by autocatalysis.

In terms of processing, autophosphorylated.

The protein localises to the cell membrane. It catalyses the reaction ATP + protein L-histidine = ADP + protein N-phospho-L-histidine.. Member of the two-component regulatory system SaeR/SaeS. Probably functions as a membrane-associated protein kinase that upon sensing the appropriate signal, autophosphorylates and in turn activates the cytosolic response regulator SaeR. In Staphylococcus epidermidis (strain ATCC 35984 / DSM 28319 / BCRC 17069 / CCUG 31568 / BM 3577 / RP62A), this protein is Histidine protein kinase SaeS (saeS).